A 444-amino-acid polypeptide reads, in one-letter code: 23S rRNA (uracil(1939)-C(5))-methyltransferase RlmD (444 aa).

The TRAM domain occupies Arg-5–Glu-67. The [4Fe-4S] cluster site is built by Cys-80, Cys-86, Cys-89, and Cys-168. Residues Gln-276, Phe-305, Asn-310, Glu-326, Asp-353, and Asp-374 each coordinate S-adenosyl-L-methionine. The active-site Nucleophile is the Cys-400.

It belongs to the class I-like SAM-binding methyltransferase superfamily. RNA M5U methyltransferase family. RlmD subfamily.

It catalyses the reaction uridine(1939) in 23S rRNA + S-adenosyl-L-methionine = 5-methyluridine(1939) in 23S rRNA + S-adenosyl-L-homocysteine + H(+). Its function is as follows. Catalyzes the formation of 5-methyl-uridine at position 1939 (m5U1939) in 23S rRNA. This chain is 23S rRNA (uracil(1939)-C(5))-methyltransferase RlmD, found in Xanthomonas euvesicatoria pv. vesicatoria (strain 85-10) (Xanthomonas campestris pv. vesicatoria).